The sequence spans 582 residues: NudC domain-containing protein 1 (582 aa).

Serine 7 is subject to Phosphoserine. One can recognise a CS domain in the interval 272–360 (KVEPLYYWQQ…NEGLMWPELV (89 aa)). At serine 387 the chain carries Phosphoserine.

It is found in the cytoplasm. The protein resides in the nucleus. This Mus musculus (Mouse) protein is NudC domain-containing protein 1.